The primary structure comprises 388 residues: Lipid-A-disaccharide synthase (388 aa).

Belongs to the LpxB family.

It carries out the reaction a lipid X + a UDP-2-N,3-O-bis[(3R)-3-hydroxyacyl]-alpha-D-glucosamine = a lipid A disaccharide + UDP + H(+). Its pathway is bacterial outer membrane biogenesis; LPS lipid A biosynthesis. Condensation of UDP-2,3-diacylglucosamine and 2,3-diacylglucosamine-1-phosphate to form lipid A disaccharide, a precursor of lipid A, a phosphorylated glycolipid that anchors the lipopolysaccharide to the outer membrane of the cell. In Burkholderia mallei (strain NCTC 10247), this protein is Lipid-A-disaccharide synthase.